The following is a 1601-amino-acid chain: Ectopic P granules protein 5 (1601 aa).

Positions 1–109 are disordered; that stretch reads MAELVRPKKP…EAPPIPARNL (109 aa). The segment covering 15–26 has biased composition (basic and acidic residues); the sequence is RPQSDDAPRIPD.

Belongs to the EPG5 family.

It is found in the cytoplasm. In terms of biological role, involved in autophagy. Has a role in the degradation of protein aggregates within autophagosomes. Essential for starvation-induced autotrophy and omegasome development. In Caenorhabditis briggsae, this protein is Ectopic P granules protein 5 (epg-5).